The sequence spans 259 residues: UPF0246 protein NGO_0461 (259 aa).

Belongs to the UPF0246 family.

The polypeptide is UPF0246 protein NGO_0461 (Neisseria gonorrhoeae (strain ATCC 700825 / FA 1090)).